The primary structure comprises 81 residues: Photosystem I iron-sulfur center (81 aa).

2 4Fe-4S ferredoxin-type domains span residues 2–31 and 37–68; these read SHSVKIYDTCIGCTQCVRACPLDVLEMVPW and GQIASSPRTEDCIGCKRCETACPTDFLSVRVY. Cys11, Cys14, Cys17, Cys21, Cys48, Cys51, Cys54, and Cys58 together coordinate [4Fe-4S] cluster.

The cyanobacterial PSI reaction center is composed of one copy each of PsaA,B,C,D,E,F,I,J,K,L,M and X, and forms trimeric complexes. Requires [4Fe-4S] cluster as cofactor.

It is found in the cellular thylakoid membrane. It catalyses the reaction reduced [plastocyanin] + hnu + oxidized [2Fe-2S]-[ferredoxin] = oxidized [plastocyanin] + reduced [2Fe-2S]-[ferredoxin]. Its function is as follows. Apoprotein for the two 4Fe-4S centers FA and FB of photosystem I (PSI); essential for photochemical activity. FB is the terminal electron acceptor of PSI, donating electrons to ferredoxin. The C-terminus interacts with PsaA/B/D and helps assemble the protein into the PSI complex. Required for binding of PsaD and PsaE to PSI. PSI is a plastocyanin/cytochrome c6-ferredoxin oxidoreductase, converting photonic excitation into a charge separation, which transfers an electron from the donor P700 chlorophyll pair to the spectroscopically characterized acceptors A0, A1, FX, FA and FB in turn. This chain is Photosystem I iron-sulfur center, found in Trichodesmium erythraeum (strain IMS101).